A 140-amino-acid chain; its full sequence is Ergosterol biosynthetic protein 28 homolog (140 aa).

A run of 4 helical transmembrane segments spans residues 4–24, 52–72, 79–99, and 105–125; these read FLNV…GNTL, TFGI…IDIH, ITLW…FVFG, and VGVL…LVGL.

Belongs to the ERG28 family.

It localises to the endoplasmic reticulum membrane. In Mus musculus (Mouse), this protein is Ergosterol biosynthetic protein 28 homolog.